The chain runs to 523 residues: 2-isopropylmalate synthase (523 aa).

Residues 5–267 form the Pyruvate carboxyltransferase domain; sequence VIIFDTTLRD…HTNINHHEIW (263 aa). Residues Asp14, His202, His204, and Asn238 each contribute to the Mn(2+) site. The interval 392 to 523 is regulatory domain; the sequence is RLDYFSVQSG…QNKENNKETV (132 aa).

This sequence belongs to the alpha-IPM synthase/homocitrate synthase family. LeuA type 1 subfamily. Homodimer. Requires Mn(2+) as cofactor.

It localises to the cytoplasm. It catalyses the reaction 3-methyl-2-oxobutanoate + acetyl-CoA + H2O = (2S)-2-isopropylmalate + CoA + H(+). It functions in the pathway amino-acid biosynthesis; L-leucine biosynthesis; L-leucine from 3-methyl-2-oxobutanoate: step 1/4. In terms of biological role, catalyzes the condensation of the acetyl group of acetyl-CoA with 3-methyl-2-oxobutanoate (2-ketoisovalerate) to form 3-carboxy-3-hydroxy-4-methylpentanoate (2-isopropylmalate). In Salmonella dublin (strain CT_02021853), this protein is 2-isopropylmalate synthase.